The sequence spans 187 residues: Putative manganese efflux pump MntP (187 aa).

Helical transmembrane passes span F3 to C23, H35 to Y55, F56 to L76, L107 to L127, V129 to A149, and L166 to F186.

It belongs to the MntP (TC 9.B.29) family.

The protein localises to the cell inner membrane. Functionally, probably functions as a manganese efflux pump. The protein is Putative manganese efflux pump MntP of Campylobacter jejuni subsp. doylei (strain ATCC BAA-1458 / RM4099 / 269.97).